The following is a 489-amino-acid chain: Mitochondrial-processing peptidase subunit beta (489 aa).

The transit peptide at 1–45 (MAAAALSRTLLPEARRRLWGFTRRLPLRRAAAQPLYFGGDRLRST) directs the protein to the mitochondrion. His101 serves as a coordination point for Zn(2+). The Proton acceptor role is filled by Glu104. Residues His105 and Glu181 each coordinate Zn(2+).

This sequence belongs to the peptidase M16 family. Heterodimer of PMPCA (alpha) and PMPCB (beta) subunits, forming the mitochondrial processing protease (MPP) in which PMPCA is involved in substrate recognition and binding and PMPCB is the catalytic subunit. The cofactor is Zn(2+).

Its subcellular location is the mitochondrion matrix. It carries out the reaction Release of N-terminal transit peptides from precursor proteins imported into the mitochondrion, typically with Arg in position P2.. Binding to PMPCA is required for catalytic activity. Its function is as follows. Catalytic subunit of the essential mitochondrial processing protease (MPP), which cleaves the mitochondrial sequence off newly imported precursors proteins. Preferentially, cleaves after an arginine at position P2. Required for PINK1 turnover by coupling PINK1 mitochondrial import and cleavage, which results in subsequent PINK1 proteolysis. This Mus musculus (Mouse) protein is Mitochondrial-processing peptidase subunit beta (Pmpcb).